A 478-amino-acid polypeptide reads, in one-letter code: MKILFAVSEAFPFAKSGGLADVAYSLPKALRNLGVDIRVIMPKYSDIHPDFTTKMKHICHFTVPVGWRNQYCGIEYLNLDGVPFYFVDNEYYFKRPGYYGYYDDGERFSFFSRAVCEAVYHLDFDVDIIHVNDWHTSVIPVLLKAHYGHSDKHNKIKTILTIHNLKYQGIFPKEVMYDLLSLPDEYFSEDKLKFYDAISFLKGGIIYSDKVVTVSRTYANEVRTLSYGEGLHGLLSGIGEKLIGIINGIDYEVYNPATDKLIFVNYDSNTFENRKKENKFRLQQMLNLPVSDEIVLIGMVSRLTKEKGIELIERIINKLLTLPVQLVILGAGDYHYEQMLKQYAGAFPSKVSANICYSEELARKIYAGSDMYLMPSLTEPCGISQLIAMRYGSVPIVRETGGLKDTVKPYNQFTGEGWGFSFANYDPAELFATIKYALSIYNDKNQWRNIVHQAMTQDNSWNASAYEYQKVYESLLNS.

Position 15 (Lys15) interacts with ADP-alpha-D-glucose.

Belongs to the glycosyltransferase 1 family. Bacterial/plant glycogen synthase subfamily.

The catalysed reaction is [(1-&gt;4)-alpha-D-glucosyl](n) + ADP-alpha-D-glucose = [(1-&gt;4)-alpha-D-glucosyl](n+1) + ADP + H(+). The protein operates within glycan biosynthesis; glycogen biosynthesis. In terms of biological role, synthesizes alpha-1,4-glucan chains using ADP-glucose. This is Glycogen synthase from Caldicellulosiruptor bescii (strain ATCC BAA-1888 / DSM 6725 / KCTC 15123 / Z-1320) (Anaerocellum thermophilum).